The primary structure comprises 109 residues: Large ribosomal subunit protein eL30A (109 aa).

This sequence belongs to the eukaryotic ribosomal protein eL30 family. As to quaternary structure, component of the large ribosomal subunit (LSU). Mature yeast ribosomes consist of a small (40S) and a large (60S) subunit. The 40S small subunit contains 1 molecule of ribosomal RNA (18S rRNA) and at least 33 different proteins. The large 60S subunit contains 3 rRNA molecules (25S, 5.8S and 5S rRNA) and at least 46 different proteins.

Its subcellular location is the cytoplasm. In terms of biological role, component of the ribosome, a large ribonucleoprotein complex responsible for the synthesis of proteins in the cell. The small ribosomal subunit (SSU) binds messenger RNAs (mRNAs) and translates the encoded message by selecting cognate aminoacyl-transfer RNA (tRNA) molecules. The large subunit (LSU) contains the ribosomal catalytic site termed the peptidyl transferase center (PTC), which catalyzes the formation of peptide bonds, thereby polymerizing the amino acids delivered by tRNAs into a polypeptide chain. The nascent polypeptides leave the ribosome through a tunnel in the LSU and interact with protein factors that function in enzymatic processing, targeting, and the membrane insertion of nascent chains at the exit of the ribosomal tunnel. In Schizosaccharomyces pombe (strain 972 / ATCC 24843) (Fission yeast), this protein is Large ribosomal subunit protein eL30A (rpl3001).